Here is a 527-residue protein sequence, read N- to C-terminus: Arginine--tRNA ligase (527 aa).

Residues 112 to 122 (ANPTGPLHIGH) carry the 'HIGH' region motif.

It belongs to the class-I aminoacyl-tRNA synthetase family. In terms of assembly, monomer.

The protein resides in the cytoplasm. The catalysed reaction is tRNA(Arg) + L-arginine + ATP = L-arginyl-tRNA(Arg) + AMP + diphosphate. The chain is Arginine--tRNA ligase from Nitratiruptor sp. (strain SB155-2).